A 381-amino-acid polypeptide reads, in one-letter code: Lipid-A-disaccharide synthase (381 aa).

The protein belongs to the LpxB family.

The enzyme catalyses a lipid X + a UDP-2-N,3-O-bis[(3R)-3-hydroxyacyl]-alpha-D-glucosamine = a lipid A disaccharide + UDP + H(+). Its pathway is bacterial outer membrane biogenesis; LPS lipid A biosynthesis. In terms of biological role, condensation of UDP-2,3-diacylglucosamine and 2,3-diacylglucosamine-1-phosphate to form lipid A disaccharide, a precursor of lipid A, a phosphorylated glycolipid that anchors the lipopolysaccharide to the outer membrane of the cell. This is Lipid-A-disaccharide synthase from Solibacter usitatus (strain Ellin6076).